We begin with the raw amino-acid sequence, 629 residues long: Extracellular metalloproteinase 10 (629 aa).

The signal sequence occupies residues 1 to 19 (MHGLLLAAGLLSLPLYTIA). A propeptide spanning residues 20 to 240 (HTQPSGALSR…VHNVVDYVAH (221 aa)) is cleaved from the precursor. Asn281 and Asn331 each carry an N-linked (GlcNAc...) asparagine glycan. His424 contributes to the Zn(2+) binding site. Residue Glu425 is part of the active site. His428 contributes to the Zn(2+) binding site. 2 N-linked (GlcNAc...) asparagine glycosylation sites follow: Asn469 and Asn617.

Belongs to the peptidase M36 family. It depends on Zn(2+) as a cofactor.

The protein resides in the secreted. Its function is as follows. Secreted metalloproteinase that allows assimilation of proteinaceous substrates and probably acts as a virulence factor. In Coccidioides posadasii (strain C735) (Valley fever fungus), this protein is Extracellular metalloproteinase 10 (MEP10).